A 605-amino-acid chain; its full sequence is Elongation factor 4 (605 aa).

The region spanning 11-193 is the tr-type G domain; it reads KRIRNFSIIA…RIVTQISPPK (183 aa). Residues 23-28 and 140-143 contribute to the GTP site; these read DHGKST and NKVD.

It belongs to the TRAFAC class translation factor GTPase superfamily. Classic translation factor GTPase family. LepA subfamily.

It localises to the cell membrane. It carries out the reaction GTP + H2O = GDP + phosphate + H(+). In terms of biological role, required for accurate and efficient protein synthesis under certain stress conditions. May act as a fidelity factor of the translation reaction, by catalyzing a one-codon backward translocation of tRNAs on improperly translocated ribosomes. Back-translocation proceeds from a post-translocation (POST) complex to a pre-translocation (PRE) complex, thus giving elongation factor G a second chance to translocate the tRNAs correctly. Binds to ribosomes in a GTP-dependent manner. The chain is Elongation factor 4 from Phytoplasma australiense.